The primary structure comprises 133 residues: Holo-[acyl-carrier-protein] synthase (133 aa).

Asp8 and Glu57 together coordinate Mg(2+).

The protein belongs to the P-Pant transferase superfamily. AcpS family. The cofactor is Mg(2+).

It is found in the cytoplasm. It catalyses the reaction apo-[ACP] + CoA = holo-[ACP] + adenosine 3',5'-bisphosphate + H(+). In terms of biological role, transfers the 4'-phosphopantetheine moiety from coenzyme A to a Ser of acyl-carrier-protein. The polypeptide is Holo-[acyl-carrier-protein] synthase (Bartonella tribocorum (strain CIP 105476 / IBS 506)).